The following is a 129-amino-acid chain: Small ribosomal subunit protein uS11 (129 aa).

This sequence belongs to the universal ribosomal protein uS11 family. In terms of assembly, part of the 30S ribosomal subunit. Interacts with proteins S7 and S18. Binds to IF-3.

Functionally, located on the platform of the 30S subunit, it bridges several disparate RNA helices of the 16S rRNA. Forms part of the Shine-Dalgarno cleft in the 70S ribosome. This chain is Small ribosomal subunit protein uS11, found in Rhizobium etli (strain CIAT 652).